The following is an 82-amino-acid chain: Cytochrome b559 subunit alpha (82 aa).

The chain crosses the membrane as a helical span at residues 21 to 35; sequence VIHSITIPALFIAGW. Heme is bound at residue H23.

Belongs to the PsbE/PsbF family. Heterodimer of an alpha subunit and a beta subunit. PSII is composed of 1 copy each of membrane proteins PsbA, PsbB, PsbC, PsbD, PsbE, PsbF, PsbH, PsbI, PsbJ, PsbK, PsbL, PsbM, PsbT, PsbX, PsbY, PsbZ, Psb30/Ycf12, peripheral proteins PsbO, CyanoQ (PsbQ), PsbU, PsbV and a large number of cofactors. It forms dimeric complexes. The cofactor is heme b.

Its subcellular location is the cellular thylakoid membrane. This b-type cytochrome is tightly associated with the reaction center of photosystem II (PSII). PSII is a light-driven water:plastoquinone oxidoreductase that uses light energy to abstract electrons from H(2)O, generating O(2) and a proton gradient subsequently used for ATP formation. It consists of a core antenna complex that captures photons, and an electron transfer chain that converts photonic excitation into a charge separation. In Nostoc sp. (strain PCC 7120 / SAG 25.82 / UTEX 2576), this protein is Cytochrome b559 subunit alpha.